The primary structure comprises 219 residues: Uridylate kinase (219 aa).

Residue 9–10 (GS) participates in ATP binding. G41 is a UMP binding site. 2 residues coordinate ATP: G42 and R46. Residues D63 and 110-116 (TFPGHTT) contribute to the UMP site. Residues T136, N137, Y142, and D145 each coordinate ATP.

The protein belongs to the UMP kinase family. As to quaternary structure, homohexamer.

It is found in the cytoplasm. The catalysed reaction is UMP + ATP = UDP + ADP. The protein operates within pyrimidine metabolism; CTP biosynthesis via de novo pathway; UDP from UMP (UMPK route): step 1/1. Its activity is regulated as follows. Inhibited by UTP. Its function is as follows. Catalyzes the reversible phosphorylation of UMP to UDP. The polypeptide is Uridylate kinase (Archaeoglobus fulgidus (strain ATCC 49558 / DSM 4304 / JCM 9628 / NBRC 100126 / VC-16)).